We begin with the raw amino-acid sequence, 1026 residues long: Contactin-4 (1026 aa).

Residues 1–18 form the signal peptide; sequence MRLPWELLVLQSFILCLA. Ig-like C2-type domains are found at residues 32 to 117, 122 to 207, 225 to 311, 316 to 400, 406 to 493, and 497 to 586; these read PSPV…AKLQ, DNFK…KVLG, PKIE…GQLT, PNWI…AELS, PDFS…GNLV, and PTRV…DRLS. 6 cysteine pairs are disulfide-bonded: Cys50/Cys100, Cys144/Cys194, Cys247/Cys295, Cys337/Cys384, Cys429/Cys477, and Cys519/Cys576. Residues Asn65, Asn90, and Asn191 are each glycosylated (N-linked (GlcNAc...) asparagine). N-linked (GlcNAc...) asparagine glycans are attached at residues Asn370, Asn375, and Asn466. Fibronectin type-III domains follow at residues 599 to 697, 702 to 799, 804 to 899, and 900 to 995; these read PPEA…TEEA, TPAN…SAEE, PPAS…TRKP, and PPSQ…ISNA. A disordered region spans residues 685–710; the sequence is PSRPSEKRRTEEALPEVTPANVSGGG. A compositionally biased stretch (basic and acidic residues) spans 687–696; it reads RPSEKRRTEE. Residues Asn705, Asn764, Asn858, Asn893, Asn911, Asn929, and Asn954 are each glycosylated (N-linked (GlcNAc...) asparagine). Polar residues predominate over residues 886-896; the sequence is GPSSATVNVTT. Residues 886–907 form a disordered region; sequence GPSSATVNVTTRKPPPSQPPGN. Ser1000 carries GPI-anchor amidated serine lipidation. A propeptide spans 1001–1026 (removed in mature form); it reads GASTSNACTLSAISTIMISLTARSSL.

It belongs to the immunoglobulin superfamily. Contactin family. Interacts with PTPRG. As to expression, mainly expressed in brain. Highly expressed in cerebellum and weakly expressed in corpus callosum, caudate nucleus, amygdala and spinal cord. Also expressed in testis, pancreas, thyroid, uterus, small intestine and kidney. Not expressed in skeletal muscle. Isoform 2 is weakly expressed in cerebral cortex.

The protein resides in the cell membrane. The protein localises to the secreted. Functionally, contactins mediate cell surface interactions during nervous system development. Has some neurite outgrowth-promoting activity. May be involved in synaptogenesis. In Homo sapiens (Human), this protein is Contactin-4 (CNTN4).